The following is a 455-amino-acid chain: Glutamyl-tRNA(Gln) amidotransferase subunit A (455 aa).

Residues lysine 74 and serine 149 each act as charge relay system in the active site. The Acyl-ester intermediate role is filled by serine 173.

Belongs to the amidase family. GatA subfamily. As to quaternary structure, heterotrimer of A, B and C subunits.

It carries out the reaction L-glutamyl-tRNA(Gln) + L-glutamine + ATP + H2O = L-glutaminyl-tRNA(Gln) + L-glutamate + ADP + phosphate + H(+). In terms of biological role, allows the formation of correctly charged Gln-tRNA(Gln) through the transamidation of misacylated Glu-tRNA(Gln) in organisms which lack glutaminyl-tRNA synthetase. The reaction takes place in the presence of glutamine and ATP through an activated gamma-phospho-Glu-tRNA(Gln). The polypeptide is Glutamyl-tRNA(Gln) amidotransferase subunit A (Methanosphaera stadtmanae (strain ATCC 43021 / DSM 3091 / JCM 11832 / MCB-3)).